Reading from the N-terminus, the 40-residue chain is Alpha-conotoxin-like Qc1.4b (40 aa).

The propeptide occupies 1 to 19; the sequence is SDGRNTAANDKASDLMALR. 2 disulfides stabilise this stretch: cysteine 22/cysteine 28 and cysteine 23/cysteine 36. The lacks the Ser-Xaa-Pro motif that is crucial for potent interaction with nAChR stretch occupies residues 24–26; it reads PNP. Cysteine 36 carries the post-translational modification Cysteine amide. Residues 37 to 40 constitute a propeptide that is removed on maturation; sequence GGGR.

It belongs to the conotoxin A superfamily. In terms of tissue distribution, expressed by the venom duct.

The protein localises to the secreted. In terms of biological role, alpha-conotoxins act on postsynaptic membranes, they bind to the nicotinic acetylcholine receptors (nAChR) and thus inhibit them. Has possibly a distinct nAChR binding mode from other alpha-conotoxins, due to a different three residue motif (lacks the Ser-Xaa-Pro motif). The protein is Alpha-conotoxin-like Qc1.4b of Conus quercinus (Oak cone).